The following is a 436-amino-acid chain: Hydrolyase ccsE (436 aa).

The Nucleophile role is filled by Ser-249.

It belongs to the AB hydrolase superfamily. FUS2 hydrolase family. Homodimer.

The protein operates within mycotoxin biosynthesis. In terms of biological role, hydrolyase; part of the gene cluster that mediates the biosynthesis of a family of the mycotoxins cytochalasins E and K. The hybrid PKS-NRPS synthetase ccsA and the enoyl reductase ccsC are responsible for fusion of phenylalanine with an octaketide backbone and subsequent release of the stable tetramic acid precursor. The polyketide synthase module (PKS) of the PKS-NRPS ccsA is responsible for the synthesis of the octaketide backbone. The downstream nonribosomal peptide synthetase (NRPS) amidates the carboxyl end of the octaketide with a phenylalanine. A reductase-like domain (R) at the C-terminus catalyzes the reductive release of the polyketide-amino acid intermediate. Because ccsA lacks a designated enoylreductase (ER) domain, the required activity is provided the enoyl reductase ccsC. Upon formation of the 11-membered carbocycle-fused perhydroisoindolone intermediate, a number of oxidative steps are required to afford the final cytochalasin E and K, including two hydroxylations at C17 and C18, one alcohol oxidation at C17, one epoxidation at C6 and C7 and two Baeyer-Villiger oxidations. The oxidative modification at C17, C18 and the C6-C7 epoxidation are likely to be catalyzed by the two cytochrome P450 oxygenases ccsD and ccsG. CcsD may be responsible for the epoxidation of the C6-C7 double bond. CcsG may be responsible for the successive oxidative modifications at C17 and C18. The double Baeyer-Villiger oxidations of ketocytochalasin to precytochalasin and cytochalasin Z(16) are among the final steps leading to cytochalasin E and K and are catalyzed by ccsB. The first oxygen insertion step follows that of the classic BVMO mechanism, generating the ester precytochalasin. Release of precytochalasin into an aqueous environment can generate the shunt product iso-precytochalasin through spontaneous isomerization. Alternatively, precytochalasin can undergo further oxidation by ccsB to yield the in-line carbonate-containing cytochalasin Z(16). Cytochalasin Z(16) is a precursor to cytochalasin E and cytochalasin K, whereas iso-precytochalasin is a precursor to cytochalasin Z(17) and rosellichalasin. The hydrolyase ccsE may catalyze hydrolysis of epoxide bond in cytochalasin E to afford cytochalasin K. The function of ccsF has not been assigned but it may play a role in post-PKS-NRPS biosynthetic step, resistance or transport of cytochalasins and related PKS-NRPS products. This is Hydrolyase ccsE from Aspergillus clavatus (strain ATCC 1007 / CBS 513.65 / DSM 816 / NCTC 3887 / NRRL 1 / QM 1276 / 107).